Reading from the N-terminus, the 227-residue chain is Urease accessory protein UreF (227 aa).

The protein belongs to the UreF family. UreD, UreF and UreG form a complex that acts as a GTP-hydrolysis-dependent molecular chaperone, activating the urease apoprotein by helping to assemble the nickel containing metallocenter of UreC. The UreE protein probably delivers the nickel.

It localises to the cytoplasm. Its function is as follows. Required for maturation of urease via the functional incorporation of the urease nickel metallocenter. This chain is Urease accessory protein UreF, found in Shewanella halifaxensis (strain HAW-EB4).